The primary structure comprises 91 residues: Kazal-type trypsin inhibitor (91 aa).

The N-terminal stretch at 1 to 22 is a signal peptide; that stretch reads MRHIGVFVGVLALALVLLVVEA. In terms of domain architecture, Kazal-like spans 25–78; sequence DAERGVCACPRIYMPVCGSNLKTYNNDCLLRCEINSDLGRANNLRKIADQACDN. 3 cysteine pairs are disulfide-bonded: cysteine 31–cysteine 56, cysteine 33–cysteine 52, and cysteine 41–cysteine 76. N-linked (GlcNAc...) asparagine glycosylation occurs at asparagine 78.

In terms of assembly, interacts with human PLG (plasmin). Female salivary gland. Female gut at 3 and 24 hours after blood feeding. Female carcass. Male tissues. Not detected in ovary and fat body at 3 and 24 hours after blood feeding.

It is found in the secreted. In terms of biological role, anticoagulant protein that decreases host thrombin (F2) activity via an uncompetitive inhibition mechanism. Inhibits amidolytic activity of host plasmin (PLG). Inhibits amidolytic activity of host trypsin. Inhibits trypsin-like endogenous activity from gut of female mosquitoes 24 hours after feeding and weakly affects enzyme activity from gut 3 hours after feeding, suggesting a possible role as an inhibitor of endogenous proteases. Its function is as follows. (Microbial infection) Limits host plasmin-mediated enhancement of dengue virus type 2 infection in mosquito midgut. The polypeptide is Kazal-type trypsin inhibitor (Aedes aegypti (Yellowfever mosquito)).